The following is a 712-amino-acid chain: TGF-beta-activated kinase 1 and MAP3K7-binding protein 3 (712 aa).

An N-acetylalanine modification is found at alanine 2. The 44-residue stretch at 8–51 folds into the CUE domain; that stretch reads LDIQVLHDLRQRFPEIPEGVVSQCMLQNNNNLEACCRALSQESS. A phosphoserine mark is found at serine 60, serine 101, and serine 103. Disordered stretches follow at residues 141-189, 227-345, 369-447, and 475-509; these read FMNE…HIPR, PGSI…KQGS, TVEP…SPRV, and ERSA…SSGS. The span at 163 to 173 shows a compositional bias: polar residues; that stretch reads MQTGMNPSAMQ. Low complexity-rich tracts occupy residues 233–249 and 269–290; these read RQTS…QSTP and YPHQ…IPQS. A compositionally biased stretch (pro residues) spans 322–332; that stretch reads PPSPSTTPPHP. Polar residues-rich tracts occupy residues 336–345 and 371–404; these read GPPSYQKQGS and EPSQ…TATT. Serine 385 carries the post-translational modification Phosphoserine. At threonine 404 the chain carries Phosphothreonine. Low complexity predominate over residues 405–417; the sequence is PPSSSPSRGISSQ. Serine 409 and serine 492 each carry phosphoserine. The residue at position 506 (serine 506) is a Phosphoserine; by MAPKAPK2 and MAPKAPK3. Positions 517–559 form a coiled coil; it reads ALLLHQRARMERLAKQLKLEKEELERLKSEVNGMEHDLMQRRL. A disordered region spans residues 609–636; it reads MNNFYDNIEPGPVVPPKPSKKDSSDPCT. Positions 627-636 are enriched in basic and acidic residues; the sequence is SKKDSSDPCT. Residue lysine 649 forms a Glycyl lysine isopeptide (Lys-Gly) (interchain with G-Cter in ubiquitin) linkage. Over residues 658 to 667 the composition is skewed to basic and acidic residues; the sequence is QAAAADEHRT. The interval 658-682 is disordered; it reads QAAAADEHRTGSTQSPRTQPRDEDY. The RanBP2-type zinc-finger motif lies at 682 to 712; that stretch reads YEGAPWNCDSCTFLNHPALNRCEQCEMPRYT. The residue at position 692 (cysteine 692) is a (Microbial infection) S-methylcysteine.

In terms of assembly, interacts with TAB1, TAB2, MAP3K7, TRAF2 and TRAF6. The minimal TAB3-containing complex (TAB1-MAP3K7-TAB3) appears not to contain TAB2. However, it seems sensible to consider that TAB2 may also join this complex and may act in a cooperative manner with TAB3. Interacts with DYNC2I2 (via the WD domains). Interacts with RBCK1. Binds 'Lys-63'-linked polyubiquitin chains. Interacts with TRIM5. Interacts with TRIM38 (via B30.2/SPRY domain), leading to its translocation to lysosomes and degradation. Interacts with ASB1. (Microbial infection) Interacts with M.tuberculosis PtpA, which blocks the NF-kappa-B signaling pathway. In terms of processing, ubiquitinated; following IL1 stimulation or TRAF6 overexpression. Ubiquitinated by AMFR via 'Lys-27'-linked polyubiquitination; leading to TAK1/MAP3K7 activation. Post-translationally, degraded in a lysosome-dependent manner following interaction with TRIM38. Phosphorylated at Ser-506 by MAPKAPK2 and MAPKAPK3 following IL1 treatment. In terms of processing, (Microbial infection) Methylated at Cys-692 by enteropathogenic E.coli protein NleE or S.flexneri protein OspZ: methylation disrupts zinc-binding and ability to bind 'Lys-63'-linked ubiquitin, leading to NF-kappa-B inactivation. Widely expressed. Constitutively overexpressed in certain tumor tissues. In terms of tissue distribution, major transcript. As to expression, minor transcript.

In terms of biological role, adapter required to activate the JNK and NF-kappa-B signaling pathways through the specific recognition of 'Lys-63'-linked polyubiquitin chains by its RanBP2-type zinc finger (NZF). Acts as an adapter linking MAP3K7/TAK1 and TRAF6 to 'Lys-63'-linked polyubiquitin chains. The RanBP2-type zinc finger (NZF) specifically recognizes Lys-63'-linked polyubiquitin chains unanchored or anchored to the substrate proteins such as RIPK1/RIP1 and RIPK2: this acts as a scaffold to organize a large signaling complex to promote autophosphorylation of MAP3K7/TAK1, and subsequent activation of I-kappa-B-kinase (IKK) core complex by MAP3K7/TAK1. Its function is as follows. May be an oncogenic factor. The sequence is that of TGF-beta-activated kinase 1 and MAP3K7-binding protein 3 from Homo sapiens (Human).